Here is a 402-residue protein sequence, read N- to C-terminus: Protein RETARDED ROOT GROWTH-LIKE (402 aa).

Residues Ser-375–Tyr-395 form a helical membrane-spanning segment.

The protein belongs to the RMD1/sif2 family. As to expression, highly expressed in germinating seeds and developing seedlings. Also present at low levels in seedlings, roots, leaves, stems and flowers, and barely in siliques.

The protein localises to the mitochondrion membrane. It is found in the mitochondrion. In terms of biological role, mediates abscisic acid (ABA) signal transduction through mitochondrial retrograde regulation involving ABI4 during seed germination and seedling growth, and leading to the production of reactive oxygen species (ROS) by the alternative respiratory pathway. Required for the maintenance of mitochondrial structure. This chain is Protein RETARDED ROOT GROWTH-LIKE, found in Arabidopsis thaliana (Mouse-ear cress).